The following is a 223-amino-acid chain: Urease accessory protein UreF (223 aa).

It belongs to the UreF family. In terms of assembly, ureD, UreF and UreG form a complex that acts as a GTP-hydrolysis-dependent molecular chaperone, activating the urease apoprotein by helping to assemble the nickel containing metallocenter of UreC. The UreE protein probably delivers the nickel.

Its subcellular location is the cytoplasm. Required for maturation of urease via the functional incorporation of the urease nickel metallocenter. This is Urease accessory protein UreF from Mesorhizobium japonicum (strain LMG 29417 / CECT 9101 / MAFF 303099) (Mesorhizobium loti (strain MAFF 303099)).